We begin with the raw amino-acid sequence, 628 residues long: Eukaryotic peptide chain release factor GTP-binding subunit ERF3B (628 aa).

The span at 1 to 10 shows a compositional bias: low complexity; sequence MDSGSSSSDS. Disordered stretches follow at residues 1–44, 71–124, and 146–191; these read MDSG…REPL, SFLR…LEGS, and LEES…KSKS. Positions 201–425 constitute a tr-type G domain; the sequence is KEHVNVVFIG…YLDNLPNFNR (225 aa). Positions 210–217 are G1; the sequence is GHVDAGKS. 213–218 is a binding site for GTP; the sequence is DAGKST. The tract at residues 266–270 is G2; the sequence is GKTVE. A G3 region spans residues 287–290; the sequence is DAPG. GTP contacts are provided by residues 349-352 and 391-393; these read NKMD and SGL. A G4 region spans residues 349–352; the sequence is NKMD. The G5 stretch occupies residues 391-393; that stretch reads SGL.

Belongs to the TRAFAC class translation factor GTPase superfamily. Classic translation factor GTPase family. ERF3 subfamily. As to quaternary structure, component of the eRF1-eRF3-GTP ternary complex, composed of ETF1/ERF1 and ERF3 (GSPT1/ERF3A or GSPT2/ERF3B) and GTP. Component of the transient SURF (SMG1-UPF1-eRF1-eRF3) complex. Interacts with UPF1 and PABPC1.

The protein resides in the cytoplasm. The enzyme catalyses GTP + H2O = GDP + phosphate + H(+). In terms of biological role, GTPase component of the eRF1-eRF3-GTP ternary complex, a ternary complex that mediates translation termination in response to the termination codons UAA, UAG and UGA. GSPT2/ERF3B mediates ETF1/ERF1 delivery to stop codons: The eRF1-eRF3-GTP complex binds to a stop codon in the ribosomal A-site. GTP hydrolysis by GSPT2/ERF3B induces a conformational change that leads to its dissociation, permitting ETF1/ERF1 to accommodate fully in the A-site. Component of the transient SURF complex which recruits UPF1 to stalled ribosomes in the context of nonsense-mediated decay (NMD) of mRNAs containing premature stop codons. This Pongo abelii (Sumatran orangutan) protein is Eukaryotic peptide chain release factor GTP-binding subunit ERF3B (GSPT2).